We begin with the raw amino-acid sequence, 160 residues long: Protein-export protein SecB (160 aa).

Belongs to the SecB family. Homotetramer, a dimer of dimers. One homotetramer interacts with 1 SecA dimer.

It localises to the cytoplasm. In terms of biological role, one of the proteins required for the normal export of preproteins out of the cell cytoplasm. It is a molecular chaperone that binds to a subset of precursor proteins, maintaining them in a translocation-competent state. It also specifically binds to its receptor SecA. This chain is Protein-export protein SecB, found in Beijerinckia indica subsp. indica (strain ATCC 9039 / DSM 1715 / NCIMB 8712).